A 47-amino-acid polypeptide reads, in one-letter code: Large ribosomal subunit protein bL34 (47 aa).

Belongs to the bacterial ribosomal protein bL34 family.

This Mycobacteroides abscessus (strain ATCC 19977 / DSM 44196 / CCUG 20993 / CIP 104536 / JCM 13569 / NCTC 13031 / TMC 1543 / L948) (Mycobacterium abscessus) protein is Large ribosomal subunit protein bL34.